A 229-amino-acid chain; its full sequence is Protein OPG034 (229 aa).

It belongs to the orthopoxvirus OPG034 family.

The polypeptide is Protein OPG034 (OPG034) (Vaccinia virus (strain Western Reserve) (VACV)).